Consider the following 63-residue polypeptide: Large ribosomal subunit protein eL37 (63 aa).

Residues cysteine 20, cysteine 23, cysteine 35, and cysteine 38 each contribute to the Zn(2+) site. The C4-type zinc finger occupies cysteine 20 to cysteine 38.

Belongs to the eukaryotic ribosomal protein eL37 family. Zn(2+) serves as cofactor.

Its function is as follows. Binds to the 23S rRNA. The chain is Large ribosomal subunit protein eL37 from Thermofilum pendens (strain DSM 2475 / Hrk 5).